The sequence spans 201 residues: MALHDENVVWHSHPVTVAAREQLHGHRGVVLWFTGLSGSGKSTVAGALEEALHQRGVSTYLLDGDNVRYGLCRDLGFSDADRQENIRRVGEVASLMADAGLIVLTAFISPHRAERQLVKERVGHDRFIEIYVNTPLAICEQRDPKGLYKKARAGELRNFTGIDAIYEAPDSPQVHLNGEQLVTNLVSQLLDLLRRRDIIRS.

35 to 42 (GLSGSGKS) provides a ligand contact to ATP. S109 serves as the catalytic Phosphoserine intermediate.

It belongs to the APS kinase family.

It carries out the reaction adenosine 5'-phosphosulfate + ATP = 3'-phosphoadenylyl sulfate + ADP + H(+). The protein operates within sulfur metabolism; hydrogen sulfide biosynthesis; sulfite from sulfate: step 2/3. Functionally, catalyzes the synthesis of activated sulfate. This is Adenylyl-sulfate kinase from Salmonella gallinarum (strain 287/91 / NCTC 13346).